The sequence spans 311 residues: Ornithine carbamoyltransferase (311 aa).

Residues Ser59–Thr62, Gln86, Arg110, and His137–Gln140 contribute to the carbamoyl phosphate site. L-ornithine contacts are provided by residues Asn168, Asp228, and Ser232–Met233. Carbamoyl phosphate-binding positions include Cys267–Leu268 and Arg295.

Belongs to the aspartate/ornithine carbamoyltransferase superfamily. OTCase family.

The protein localises to the cytoplasm. It carries out the reaction carbamoyl phosphate + L-ornithine = L-citrulline + phosphate + H(+). It functions in the pathway amino-acid biosynthesis; L-arginine biosynthesis; L-arginine from L-ornithine and carbamoyl phosphate: step 1/3. In terms of biological role, reversibly catalyzes the transfer of the carbamoyl group from carbamoyl phosphate (CP) to the N(epsilon) atom of ornithine (ORN) to produce L-citrulline. In Caulobacter vibrioides (strain ATCC 19089 / CIP 103742 / CB 15) (Caulobacter crescentus), this protein is Ornithine carbamoyltransferase.